Reading from the N-terminus, the 209-residue chain is Uracil phosphoribosyltransferase (209 aa).

5-phospho-alpha-D-ribose 1-diphosphate-binding positions include Arg79, Arg104, and 131–139 (DPMLATGGS). Uracil contacts are provided by residues Ile194 and 199–201 (GDA). Asp200 is a 5-phospho-alpha-D-ribose 1-diphosphate binding site.

It belongs to the UPRTase family. Mg(2+) serves as cofactor.

The enzyme catalyses UMP + diphosphate = 5-phospho-alpha-D-ribose 1-diphosphate + uracil. The protein operates within pyrimidine metabolism; UMP biosynthesis via salvage pathway; UMP from uracil: step 1/1. Allosterically activated by GTP. Catalyzes the conversion of uracil and 5-phospho-alpha-D-ribose 1-diphosphate (PRPP) to UMP and diphosphate. The chain is Uracil phosphoribosyltransferase from Streptococcus pyogenes serotype M1.